A 424-amino-acid chain; its full sequence is Adenylosuccinate synthetase 2 (424 aa).

GTP-binding positions include Gly11–Lys17 and Gly39–Thr41. The Proton acceptor role is filled by Asp12. Positions 12 and 39 each coordinate Mg(2+). IMP contacts are provided by residues Asp12–Lys15, Asn37–His40, Thr127, Arg141, Gln223, Thr238, and Arg302. The active-site Proton donor is His40. Position 298–304 (Thr298–Arg304) interacts with substrate. GTP contacts are provided by residues Arg304, Lys330–Asp332, and Ser412–Gly414.

The protein belongs to the adenylosuccinate synthetase family. As to quaternary structure, homodimer. Mg(2+) serves as cofactor.

The protein resides in the cytoplasm. The catalysed reaction is IMP + L-aspartate + GTP = N(6)-(1,2-dicarboxyethyl)-AMP + GDP + phosphate + 2 H(+). The protein operates within purine metabolism; AMP biosynthesis via de novo pathway; AMP from IMP: step 1/2. Its function is as follows. Plays an important role in the de novo pathway of purine nucleotide biosynthesis. Catalyzes the first committed step in the biosynthesis of AMP from IMP. This Methanosarcina acetivorans (strain ATCC 35395 / DSM 2834 / JCM 12185 / C2A) protein is Adenylosuccinate synthetase 2.